A 301-amino-acid chain; its full sequence is NAD kinase (301 aa).

Residue Asp-73 is the Proton acceptor of the active site. NAD(+) is bound by residues 73–74 (DG), 151–152 (ND), Arg-179, Asp-181, 192–197 (TAYALS), Ala-216, and Gln-250.

Belongs to the NAD kinase family. A divalent metal cation is required as a cofactor.

The protein resides in the cytoplasm. It carries out the reaction NAD(+) + ATP = ADP + NADP(+) + H(+). Its function is as follows. Involved in the regulation of the intracellular balance of NAD and NADP, and is a key enzyme in the biosynthesis of NADP. Catalyzes specifically the phosphorylation on 2'-hydroxyl of the adenosine moiety of NAD to yield NADP. The chain is NAD kinase from Methylibium petroleiphilum (strain ATCC BAA-1232 / LMG 22953 / PM1).